The chain runs to 810 residues: Plasminogen (810 aa).

The N-terminal stretch at 1 to 19 (MQRKELVLLFLLFLQPGHG) is a signal peptide. In terms of domain architecture, PAN spans 20-98 (IPLDDYVTTQ…RDVILFEKKM (79 aa)). Intrachain disulfides connect Cys49-Cys73, Cys53-Cys61, Cys103-Cys181, Cys124-Cys164, Cys152-Cys176, Cys185-Cys262, Cys188-Cys316, Cys206-Cys245, Cys234-Cys257, Cys275-Cys352, Cys296-Cys335, Cys324-Cys347, Cys379-Cys456, Cys400-Cys439, Cys428-Cys451, Cys482-Cys561, Cys503-Cys544, Cys532-Cys556, Cys569-Cys685, Cys579-Cys586, Cys607-Cys623, Cys699-Cys766, Cys729-Cys745, and Cys756-Cys784. Kringle domains follow at residues 103–181 (CKVG…IIQC), 185–262 (CMHC…IPRC), 275–352 (CLMG…IPDC), 379–456 (CYQG…LKKC), and 482–561 (CIID…IPHC). A glycan (N-linked (GlcNAc...) asparagine) is linked at Asn339. Residues 398–418 (KKCQPWTSMRPHRHSKTPENY) are disordered. The 227-residue stretch at 582–808 (RVGGCVAHPH…YVSWLQDVMR (227 aa)) folds into the Peptidase S1 domain. At Ser598 the chain carries Phosphoserine. Residues His622 and Asp665 each act as charge relay system in the active site. Ser760 acts as the Charge relay system in catalysis.

The protein belongs to the peptidase S1 family. Plasminogen subfamily. Interacts with CSPG4 and AMOT. Interacts (via the Kringle domains) with HRG; the interaction tethers PLG to the cell surface and enhances its activation. Interacts (via Kringle 4 domain) with ADA; the interaction stimulates PLG activation when in complex with DPP4. Angiostatin: Interacts with ATP5F1A; the interaction inhibits most of the angiogenic effects of angiostatin. In the presence of the inhibitor, the activation involves only cleavage after Arg-582, yielding two chains held together by two disulfide bonds. In the absence of the inhibitor, the activation involves additionally the removal of the activation peptide.

The protein resides in the secreted. The enzyme catalyses Preferential cleavage: Lys-|-Xaa &gt; Arg-|-Xaa, higher selectivity than trypsin. Converts fibrin into soluble products.. Converted into plasmin by plasminogen activators, both plasminogen and its activator being bound to fibrin. Cannot be activated with streptokinase. Its function is as follows. Plasmin dissolves the fibrin of blood clots and acts as a proteolytic factor in a variety of other processes including embryonic development, tissue remodeling, tumor invasion, and inflammation. In ovulation, weakens the walls of the Graafian follicle. It activates the urokinase-type plasminogen activator, collagenases and several complement zymogens, such as C1, C4 and C5. Cleavage of fibronectin and laminin leads to cell detachment and apoptosis. Also cleaves fibrin, thrombospondin and von Willebrand factor. Its role in tissue remodeling and tumor invasion may be modulated by CSPG4. Binds to cells. The sequence is that of Plasminogen (PLG) from Erinaceus europaeus (Western European hedgehog).